The following is a 1065-amino-acid chain: DNA-directed RNA polymerase subunit beta (1065 aa).

Belongs to the RNA polymerase beta chain family. In plastids the minimal PEP RNA polymerase catalytic core is composed of four subunits: alpha, beta, beta', and beta''. When a (nuclear-encoded) sigma factor is associated with the core the holoenzyme is formed, which can initiate transcription.

It is found in the plastid. The protein resides in the chloroplast. The catalysed reaction is RNA(n) + a ribonucleoside 5'-triphosphate = RNA(n+1) + diphosphate. Functionally, DNA-dependent RNA polymerase catalyzes the transcription of DNA into RNA using the four ribonucleoside triphosphates as substrates. In Marchantia polymorpha (Common liverwort), this protein is DNA-directed RNA polymerase subunit beta.